An 84-amino-acid chain; its full sequence is MAHKKGQGSTQNNRDSIGRRLGVKKFGGEFVRAGNIIIRQRGTATHAGNNVGMGKDHTIFALIDGFVKFERKDKNRKKVSVYPA.

It belongs to the bacterial ribosomal protein bL27 family.

This is Large ribosomal subunit protein bL27 from Campylobacter lari (strain RM2100 / D67 / ATCC BAA-1060).